A 230-amino-acid chain; its full sequence is Cytidylate kinase (230 aa).

12–20 is a binding site for ATP; sequence GPSGAGKGT.

The protein belongs to the cytidylate kinase family. Type 1 subfamily.

Its subcellular location is the cytoplasm. The catalysed reaction is CMP + ATP = CDP + ADP. The enzyme catalyses dCMP + ATP = dCDP + ADP. In Shewanella sp. (strain W3-18-1), this protein is Cytidylate kinase.